Consider the following 258-residue polypeptide: Deoxyribose-phosphate aldolase (258 aa).

Catalysis depends on D102, which acts as the Proton donor/acceptor. K165 acts as the Schiff-base intermediate with acetaldehyde in catalysis. The active-site Proton donor/acceptor is K199.

Belongs to the DeoC/FbaB aldolase family. DeoC type 2 subfamily.

The protein resides in the cytoplasm. It carries out the reaction 2-deoxy-D-ribose 5-phosphate = D-glyceraldehyde 3-phosphate + acetaldehyde. It participates in carbohydrate degradation; 2-deoxy-D-ribose 1-phosphate degradation; D-glyceraldehyde 3-phosphate and acetaldehyde from 2-deoxy-alpha-D-ribose 1-phosphate: step 2/2. Catalyzes a reversible aldol reaction between acetaldehyde and D-glyceraldehyde 3-phosphate to generate 2-deoxy-D-ribose 5-phosphate. The polypeptide is Deoxyribose-phosphate aldolase (Vibrio parahaemolyticus serotype O3:K6 (strain RIMD 2210633)).